The sequence spans 280 residues: Acetyl-coenzyme A carboxylase carboxyl transferase subunit beta (280 aa).

Residues 25–280 enclose the CoA carboxyltransferase N-terminal domain; the sequence is VMRECPICHA…RLHTKENAYG (256 aa). 4 residues coordinate Zn(2+): Cys29, Cys32, Cys47, and Cys50. The C4-type zinc-finger motif lies at 29 to 50; that stretch reads CPICHAKFLSMRLGRDHTCPKC.

Belongs to the AccD/PCCB family. In terms of assembly, acetyl-CoA carboxylase is a heterohexamer composed of biotin carboxyl carrier protein (AccB), biotin carboxylase (AccC) and two subunits each of ACCase subunit alpha (AccA) and ACCase subunit beta (AccD). It depends on Zn(2+) as a cofactor.

It is found in the cytoplasm. It catalyses the reaction N(6)-carboxybiotinyl-L-lysyl-[protein] + acetyl-CoA = N(6)-biotinyl-L-lysyl-[protein] + malonyl-CoA. It functions in the pathway lipid metabolism; malonyl-CoA biosynthesis; malonyl-CoA from acetyl-CoA: step 1/1. Component of the acetyl coenzyme A carboxylase (ACC) complex. Biotin carboxylase (BC) catalyzes the carboxylation of biotin on its carrier protein (BCCP) and then the CO(2) group is transferred by the transcarboxylase to acetyl-CoA to form malonyl-CoA. The polypeptide is Acetyl-coenzyme A carboxylase carboxyl transferase subunit beta (Lactobacillus helveticus (strain DPC 4571)).